The sequence spans 75 residues: Brevinin-2ISc (75 aa).

The signal sequence occupies residues M1–C22. Residues E23–V40 constitute a propeptide, removed in mature form. Residues C69 and C75 are joined by a disulfide bond.

In terms of tissue distribution, expressed by the skin glands.

The protein resides in the secreted. Has antimicrobial activity against Gram-negative bacterium E.coli ATCC 8739 (MIC=50 ug) and against Gram positive bacteria S.aureus ATCC 6538 (MIC=25 ug). Has no activity against methicillin-resistant S.aureus ATCC 43300, B.subtilis ATCC 6633 and against fungus C.albicans ATCC 90028. This is Brevinin-2ISc from Odorrana ishikawae (Ishikawa's frog).